Reading from the N-terminus, the 425-residue chain is Multifunctional CCA protein (425 aa).

Residues glycine 8 and arginine 11 each coordinate ATP. CTP is bound by residues glycine 8 and arginine 11. Mg(2+)-binding residues include aspartate 21 and aspartate 23. ATP contacts are provided by arginine 91, arginine 141, and arginine 144. Residues arginine 91, arginine 141, and arginine 144 each coordinate CTP. The 102-residue stretch at 230-331 (TGVHLMMVLD…VRLLERCDAI (102 aa)) folds into the HD domain.

The protein belongs to the tRNA nucleotidyltransferase/poly(A) polymerase family. Bacterial CCA-adding enzyme type 1 subfamily. As to quaternary structure, monomer. Can also form homodimers and oligomers. It depends on Mg(2+) as a cofactor. Ni(2+) serves as cofactor.

It catalyses the reaction a tRNA precursor + 2 CTP + ATP = a tRNA with a 3' CCA end + 3 diphosphate. It carries out the reaction a tRNA with a 3' CCA end + 2 CTP + ATP = a tRNA with a 3' CCACCA end + 3 diphosphate. Catalyzes the addition and repair of the essential 3'-terminal CCA sequence in tRNAs without using a nucleic acid template. Adds these three nucleotides in the order of C, C, and A to the tRNA nucleotide-73, using CTP and ATP as substrates and producing inorganic pyrophosphate. tRNA 3'-terminal CCA addition is required both for tRNA processing and repair. Also involved in tRNA surveillance by mediating tandem CCA addition to generate a CCACCA at the 3' terminus of unstable tRNAs. While stable tRNAs receive only 3'-terminal CCA, unstable tRNAs are marked with CCACCA and rapidly degraded. The polypeptide is Multifunctional CCA protein (Acidovorax ebreus (strain TPSY) (Diaphorobacter sp. (strain TPSY))).